The sequence spans 368 residues: 1-aminocyclopropane-1-carboxylate synthase (368 aa).

Lysine 230 bears the N6-(pyridoxal phosphate)lysine mark.

It belongs to the class-I pyridoxal-phosphate-dependent aminotransferase family. Homodimer. The cofactor is pyridoxal 5'-phosphate.

It carries out the reaction S-adenosyl-L-methionine = 1-aminocyclopropane-1-carboxylate + S-methyl-5'-thioadenosine + H(+). It functions in the pathway alkene biosynthesis; ethylene biosynthesis via S-adenosyl-L-methionine; ethylene from S-adenosyl-L-methionine: step 1/2. Functionally, catalyzes the formation of 1-aminocyclopropane-1-carboxylate, a direct precursor of ethylene in higher plants. The polypeptide is 1-aminocyclopropane-1-carboxylate synthase (ACS5) (Vigna radiata var. radiata (Mung bean)).